The following is a 555-amino-acid chain: Dihydroxy-acid dehydratase (555 aa).

Asp78 contacts Mg(2+). Cys119 contributes to the [2Fe-2S] cluster binding site. Residues Asp120 and Lys121 each contribute to the Mg(2+) site. An N6-carboxylysine modification is found at Lys121. Cys195 lines the [2Fe-2S] cluster pocket. Glu444 serves as a coordination point for Mg(2+). Catalysis depends on Ser470, which acts as the Proton acceptor.

Belongs to the IlvD/Edd family. As to quaternary structure, homodimer. [2Fe-2S] cluster is required as a cofactor. Mg(2+) serves as cofactor.

The catalysed reaction is (2R)-2,3-dihydroxy-3-methylbutanoate = 3-methyl-2-oxobutanoate + H2O. The enzyme catalyses (2R,3R)-2,3-dihydroxy-3-methylpentanoate = (S)-3-methyl-2-oxopentanoate + H2O. It participates in amino-acid biosynthesis; L-isoleucine biosynthesis; L-isoleucine from 2-oxobutanoate: step 3/4. The protein operates within amino-acid biosynthesis; L-valine biosynthesis; L-valine from pyruvate: step 3/4. Functionally, functions in the biosynthesis of branched-chain amino acids. Catalyzes the dehydration of (2R,3R)-2,3-dihydroxy-3-methylpentanoate (2,3-dihydroxy-3-methylvalerate) into 2-oxo-3-methylpentanoate (2-oxo-3-methylvalerate) and of (2R)-2,3-dihydroxy-3-methylbutanoate (2,3-dihydroxyisovalerate) into 2-oxo-3-methylbutanoate (2-oxoisovalerate), the penultimate precursor to L-isoleucine and L-valine, respectively. In Dehalococcoides mccartyi (strain ATCC BAA-2266 / KCTC 15142 / 195) (Dehalococcoides ethenogenes (strain 195)), this protein is Dihydroxy-acid dehydratase.